The primary structure comprises 96 residues: uncharacterized protein (96 aa).

Positions 10, 16, and 55 each coordinate [3Fe-4S] cluster. The interval A67–G96 is disordered. Residues E83 to G96 are compositionally biased toward basic and acidic residues.

[3Fe-4S] cluster is required as a cofactor.

Its function is as follows. Electron transport protein for the cytochrome systems. This is an uncharacterized protein from Bradyrhizobium diazoefficiens (strain JCM 10833 / BCRC 13528 / IAM 13628 / NBRC 14792 / USDA 110).